Consider the following 145-residue polypeptide: MATWALLLLAAMLLGNPGLVFSRLSPEYYDLARAHLRDEEKSCPCLAQEGPQGDLLTKTQELGRDYRTCLTIVQKLKKMVDKPTQRSVSNAATRVCRTGRSRWRDVCRNFMRRYQSRVTQGLVAGETAQQICEDLRLCIPSTGPL.

An N-terminal signal peptide occupies residues 1 to 22; it reads MATWALLLLAAMLLGNPGLVFS. In terms of domain architecture, Saposin B-type spans 62–142; sequence LGRDYRTCLT…EDLRLCIPST (81 aa). Cystine bridges form between cysteine 69–cysteine 132 and cysteine 96–cysteine 107.

In terms of processing, a 9 kDa form is produced by proteolytic processing of a 15 kDa protein. As to expression, expressed in natural killer and T-cells.

The protein localises to the secreted. In terms of biological role, antimicrobial protein that kills intracellular pathogens. Active against a broad range of microbes, including Gram-positive and Gram-negative bacteria, fungi, and parasites. Kills Mycobacterium tuberculosis. This chain is Granulysin (GNLY), found in Homo sapiens (Human).